Reading from the N-terminus, the 855-residue chain is Inactive rhomboid protein 1 (855 aa).

The disordered stretch occupies residues 1-35; it reads MSEARRDSTSSLQRKKPPWLKLDIPSAAPATAEEP. Topologically, residues 1–411 are cytoplasmic; it reads MSEARRDSTS…HRPFFTYWLT (411 aa). Residues 25 to 35 show a composition bias toward low complexity; that stretch reads PSAAPATAEEP. Phosphoserine occurs at positions 76 and 176. 2 positions are modified to phosphothreonine: Thr-180 and Thr-183. Ser-390 carries the phosphoserine modification. A helical transmembrane segment spans residues 412–432; sequence FVHSLVTILAVCIYGIAPVGF. The Lumenal segment spans residues 433–655; sequence SQHETVDSVL…NPEVPDQFYR (223 aa). Residue Asn-583 is glycosylated (N-linked (GlcNAc...) asparagine). A helical transmembrane segment spans residues 656 to 676; the sequence is LWLSLFLHAGILHCLVSICFQ. Residues 677 to 691 lie on the Cytoplasmic side of the membrane; sequence MTVLRDLEKLAGWHR. Residues 692–712 traverse the membrane as a helical segment; sequence IAIIYLLSGVTGNLASAIFLP. Residues 713 to 714 lie on the Lumenal side of the membrane; it reads YR. The chain crosses the membrane as a helical span at residues 715 to 735; sequence AEVGPAGSQFGILACLFVELF. At 736–746 the chain is on the cytoplasmic side; it reads QSWQILARPWR. The chain crosses the membrane as a helical span at residues 747-767; sequence AFFKLLAVVLFLFTFGLLPWI. The Lumenal segment spans residues 768–772; it reads DNFAH. Residues 773–793 traverse the membrane as a helical segment; it reads ISGFISGLFLSFAFLPYISFG. Residues 794-803 are Cytoplasmic-facing; the sequence is KFDLYRKRCQ. The helical transmembrane segment at 804–824 threads the bilayer; that stretch reads IIVFQVVFLGLLAGLVVLFYV. The Lumenal segment spans residues 825–855; it reads YPVRCEWCEFLTCIPFTDKFCEKYELDAQLH.

It belongs to the peptidase S54 family. In terms of assembly, homodimer, or homooligomer. Interacts with TGFA and HBEGF. Interacts with EGF; may retain EGF in the endoplasmic reticulum and regulates its degradation through the endoplasmic reticulum-associated degradation (ERAD). Interacts (via cytoplasmic N-terminus) with FRMD8/iTAP; this interaction leads to mutual protein stabilization. Interacts with ADAM17/TACE.

Its subcellular location is the endoplasmic reticulum membrane. It is found in the golgi apparatus membrane. In terms of biological role, regulates ADAM17 protease, a sheddase of the epidermal growth factor (EGF) receptor ligands and TNF, thereby plays a role in sleep, cell survival, proliferation, migration and inflammation. Does not exhibit any protease activity on its own. In Callithrix jacchus (White-tufted-ear marmoset), this protein is Inactive rhomboid protein 1 (RHBDF1).